The sequence spans 205 residues: Lymphotoxin-alpha (205 aa).

Residues methionine 1 to glycine 34 form the signal peptide. The THD domain occupies proline 63–leucine 205. Residue asparagine 96 is glycosylated (N-linked (GlcNAc...) asparagine). Cysteine 120 and cysteine 156 are disulfide-bonded.

It belongs to the tumor necrosis factor family. As to quaternary structure, homotrimer, and heterotrimer of either two LTB and one LTA subunits or (less prevalent) two LTA and one LTB subunits. Interacts with TNFRSF14.

Its subcellular location is the secreted. It localises to the membrane. In terms of biological role, cytokine that in its homotrimeric form binds to TNFRSF1A/TNFR1, TNFRSF1B/TNFBR and TNFRSF14/HVEM. In its heterotrimeric form with LTB binds to TNFRSF3/LTBR. Lymphotoxin is produced by lymphocytes and is cytotoxic for a wide range of tumor cells in vitro and in vivo. The protein is Lymphotoxin-alpha (LTA) of Marmota monax (Woodchuck).